The sequence spans 248 residues: Small ribosomal subunit protein uS2 (248 aa).

This sequence belongs to the universal ribosomal protein uS2 family.

In Alkalilimnicola ehrlichii (strain ATCC BAA-1101 / DSM 17681 / MLHE-1), this protein is Small ribosomal subunit protein uS2.